The sequence spans 242 residues: Adenosylcobinamide-GDP ribazoletransferase (242 aa).

Helical transmembrane passes span L31–A51, L52–S72, I109–I129, G134–T154, and I188–G208.

This sequence belongs to the CobS family. Mg(2+) is required as a cofactor.

It localises to the cell inner membrane. The catalysed reaction is alpha-ribazole + adenosylcob(III)inamide-GDP = adenosylcob(III)alamin + GMP + H(+). It carries out the reaction alpha-ribazole 5'-phosphate + adenosylcob(III)inamide-GDP = adenosylcob(III)alamin 5'-phosphate + GMP + H(+). Its pathway is cofactor biosynthesis; adenosylcobalamin biosynthesis; adenosylcobalamin from cob(II)yrinate a,c-diamide: step 7/7. In terms of biological role, joins adenosylcobinamide-GDP and alpha-ribazole to generate adenosylcobalamin (Ado-cobalamin). Also synthesizes adenosylcobalamin 5'-phosphate from adenosylcobinamide-GDP and alpha-ribazole 5'-phosphate. The polypeptide is Adenosylcobinamide-GDP ribazoletransferase (Pseudomonas fluorescens (strain SBW25)).